A 147-amino-acid chain; its full sequence is ATP synthase epsilon chain (147 aa).

This sequence belongs to the ATPase epsilon chain family. F-type ATPases have 2 components, CF(1) - the catalytic core - and CF(0) - the membrane proton channel. CF(1) has five subunits: alpha(3), beta(3), gamma(1), delta(1), epsilon(1). CF(0) has three main subunits: a, b and c.

The protein localises to the cell inner membrane. In terms of biological role, produces ATP from ADP in the presence of a proton gradient across the membrane. This is ATP synthase epsilon chain from Protochlamydia amoebophila (strain UWE25).